The following is a 308-amino-acid chain: Serine/threonine-protein phosphatase 4 catalytic subunit (308 aa).

Mn(2+) is bound by residues Asp51, His53, Asp79, and Asn111. The active-site Proton donor is the His112. The Mn(2+) site is built by His161 and His235.

It belongs to the PPP phosphatase family. PP-4 (PP-X) subfamily. Catalytic subunit of the histone H2A phosphatase complex (HTP-C) containing PPH3, PSY2 and PSY4. Inactivated in a complex with phosphatase methylesterase PPE1 (PP2Ai). Interacts with phosphatase 2A activator RRD1, which can reactivate PP2Ai by dissociating the catalytic subunit from the complex. Interacts with SPT5 and TAP42. Mn(2+) serves as cofactor. Reversibly methyl esterified on Leu-308 by leucine carboxyl methyltransferase 1 (PPM1) and protein phosphatase methylesterase 1 (PPE1). Carboxyl methylation influences the affinity of the catalytic subunit for the different regulatory subunits, thereby modulating the PP2A holoenzyme's substrate specificity, enzyme activity and cellular localization.

Its subcellular location is the cytoplasm. It is found in the nucleus. It carries out the reaction O-phospho-L-seryl-[protein] + H2O = L-seryl-[protein] + phosphate. The enzyme catalyses O-phospho-L-threonyl-[protein] + H2O = L-threonyl-[protein] + phosphate. Forms the histone H2A phosphatase complex in association with the regulatory subunits PSY2 and PSY4, which dephosphorylates H2AS128ph (gamma-H2A) that has been displaced from sites of DNA lesions in the double-stranded DNA break repair process. Dephosphorylation is necessary for efficient recovery from the DNA damage checkpoint. PPH3 is directly involved in the dephosphorylation and activation of the transcription factor GLN3 in response to nutrient availability. The chain is Serine/threonine-protein phosphatase 4 catalytic subunit (PPH3) from Saccharomyces cerevisiae (strain ATCC 204508 / S288c) (Baker's yeast).